We begin with the raw amino-acid sequence, 110 residues long: uncharacterized protein (110 aa).

It to M.jannaschii MJ1213 and A.aeolicus AA15.

This is an uncharacterized protein from Methanocaldococcus jannaschii (strain ATCC 43067 / DSM 2661 / JAL-1 / JCM 10045 / NBRC 100440) (Methanococcus jannaschii).